We begin with the raw amino-acid sequence, 40 residues long: Spodomicin (40 aa).

3 disulfides stabilise this stretch: cysteine 6-cysteine 20, cysteine 10-cysteine 32, and cysteine 21-cysteine 39.

As to quaternary structure, monomer. In terms of processing, contains three disulfide bonds. Hemolymph.

It localises to the secreted. Its function is as follows. Fungicide. This Spodoptera littoralis (Egyptian cotton leafworm) protein is Spodomicin.